We begin with the raw amino-acid sequence, 525 residues long: Bifunctional pantoate ligase/cytidylate kinase (525 aa).

Residues 1–292 are pantoate--beta-alanine ligase; that stretch reads MDNVPIIRTV…VGSARLIDNM (292 aa). Residue 44-51 participates in ATP binding; the sequence is MGALHAGH. H51 (proton donor) is an active-site residue. (R)-pantoate is bound at residue Q75. Q75 is a beta-alanine binding site. An ATP-binding site is contributed by 162-165; sequence GQKD. Q168 contributes to the (R)-pantoate binding site. ATP-binding positions include I191 and 199–202; that span reads LSSR. The tract at residues 293–525 is cytidylate kinase; that stretch reads LLDARLPILA…LYQERFPDRA (233 aa).

It in the N-terminal section; belongs to the pantothenate synthetase family. In the C-terminal section; belongs to the cytidylate kinase family. Type 1 subfamily.

It is found in the cytoplasm. The enzyme catalyses (R)-pantoate + beta-alanine + ATP = (R)-pantothenate + AMP + diphosphate + H(+). It carries out the reaction CMP + ATP = CDP + ADP. It catalyses the reaction dCMP + ATP = dCDP + ADP. It functions in the pathway cofactor biosynthesis; (R)-pantothenate biosynthesis; (R)-pantothenate from (R)-pantoate and beta-alanine: step 1/1. Catalyzes the condensation of pantoate with beta-alanine in an ATP-dependent reaction via a pantoyl-adenylate intermediate. Functionally, catalyzes the transfer of a phosphate group from ATP to either CMP or dCMP to form CDP or dCDP and ADP, respectively. The polypeptide is Bifunctional pantoate ligase/cytidylate kinase (Acaryochloris marina (strain MBIC 11017)).